The sequence spans 104 residues: uncharacterized protein (104 aa).

The segment covering 58–71 (PERDRARRDRDHHP) has biased composition (basic and acidic residues). Residues 58–84 (PERDRARRDRDHHPWSRSRSQLSPRMA) form a disordered region.

This is an uncharacterized protein from Mycobacterium tuberculosis (strain ATCC 25618 / H37Rv).